The primary structure comprises 41 residues: Plantazolicin (41 aa).

Positions 1-27 (MTKITIPTALSAKVHGEGQHLFEPMAA) are excised as a propeptide. Arg-28 carries the N2,N2-dimethylarginine; in form plantazolicin A modification. A cross-link (thiazole-4-carboxylic acid (Arg-Cys)) is located at residues 28 to 29 (RC). 2 consecutive cross-links (5-methyloxazole-4-carboxylic acid (Cys-Thr)) follow at residues 29–30 (CT) and 31–32 (CT). Positions 30-31 (TC) form a cross-link, thiazole-4-carboxylic acid (Thr-Cys). Positions 32-33 (TT) form a cross-link, 5-methyloxazole-4-carboxylic acid (Thr-Thr). A cross-link (oxazole-4-carboxylic acid (Ile-Ser)) is located at residues 35-36 (IS). Cross-links (oxazole-4-carboxylic acid (Ser-Ser)) lie at residues 36–37 (SS), 37–38 (SS), and 38–39 (SS). The 5-methyloxazoline-4-carboxylic acid (Ser-Thr) cross-link spans 39–40 (ST).

Post-translationally, maturation of thiazole and oxazole containing antibiotics involves the enzymatic condensation of a Cys, Ser or Thr with the alpha-carbonyl of the preceding amino acid to form a thioether or ether bond, then dehydration to form a double bond with the alpha-amino nitrogen. Thiazoline or oxazoline ring are dehydrogenated to form thiazole or oxazole rings.

The protein resides in the secreted. Its subcellular location is the cell wall. In terms of biological role, peptide antibiotic inhibiting growth of Gram-positive bacteria. The mode of action appears to be disruption of cell walls and lysis of cells. The polypeptide is Plantazolicin (Bacillus pumilus (strain ATCC 7061 / DSM 27 / CCUG 26015 / JCM 2508 / NBRC 12092 / NCIMB 9369 / NCTC 10337 / NRRL NRS-272 / CCM 2144)).